A 315-amino-acid polypeptide reads, in one-letter code: MTKREYNSQPEMLEGAKSIGAGAATIASAGAAIGIGNVFSSLIHSVARNPSLATTTVLVVTLTLLGGVAAFYLHSFRLKGPLKKIIYLFLVFFIAVGISLIRIKAIHLLGLALPLLVPPLVWNAIGGGGEALPSTGPNGASSYSEWFTYTSDLEDSASSGRTSSSVNQPIQREQAGPSNALPEPAASPVAQQQDHLDQPFGEGGEREARAQEHDRISAEVETITSACENLEAAMVRKAHILLHQRGVTLGDPEDVKRALQLALHDDWEHDIDDRKRHFTVLRRDFGTARCERWNPFIDELRGLGNRQVNARHYVD.

Helical transmembrane passes span I19–F39, T56–F76, and P81–I101. Residues E154 to Q171 show a composition bias toward polar residues. The segment at E154–D214 is disordered. The span at G203 to D214 shows a compositional bias: basic and acidic residues.

This sequence belongs to the ATPase C chain family.

The protein resides in the mitochondrion membrane. This is an uncharacterized protein from Arabidopsis thaliana (Mouse-ear cress).